The chain runs to 283 residues: Phosphatidylserine decarboxylase proenzyme (283 aa).

Active-site charge relay system; for autoendoproteolytic cleavage activity residues include Asp90, His143, and Ser248. The active-site Schiff-base intermediate with substrate; via pyruvic acid; for decarboxylase activity is the Ser248. Ser248 is subject to Pyruvic acid (Ser); by autocatalysis.

This sequence belongs to the phosphatidylserine decarboxylase family. PSD-B subfamily. Prokaryotic type I sub-subfamily. As to quaternary structure, heterodimer of a large membrane-associated beta subunit and a small pyruvoyl-containing alpha subunit. It depends on pyruvate as a cofactor. Is synthesized initially as an inactive proenzyme. Formation of the active enzyme involves a self-maturation process in which the active site pyruvoyl group is generated from an internal serine residue via an autocatalytic post-translational modification. Two non-identical subunits are generated from the proenzyme in this reaction, and the pyruvate is formed at the N-terminus of the alpha chain, which is derived from the carboxyl end of the proenzyme. The autoendoproteolytic cleavage occurs by a canonical serine protease mechanism, in which the side chain hydroxyl group of the serine supplies its oxygen atom to form the C-terminus of the beta chain, while the remainder of the serine residue undergoes an oxidative deamination to produce ammonia and the pyruvoyl prosthetic group on the alpha chain. During this reaction, the Ser that is part of the protease active site of the proenzyme becomes the pyruvoyl prosthetic group, which constitutes an essential element of the active site of the mature decarboxylase.

It is found in the cell membrane. It carries out the reaction a 1,2-diacyl-sn-glycero-3-phospho-L-serine + H(+) = a 1,2-diacyl-sn-glycero-3-phosphoethanolamine + CO2. It functions in the pathway phospholipid metabolism; phosphatidylethanolamine biosynthesis; phosphatidylethanolamine from CDP-diacylglycerol: step 2/2. Its function is as follows. Catalyzes the formation of phosphatidylethanolamine (PtdEtn) from phosphatidylserine (PtdSer). The polypeptide is Phosphatidylserine decarboxylase proenzyme (Francisella tularensis subsp. holarctica (strain OSU18)).